The chain runs to 336 residues: Biotin synthase (336 aa).

The region spanning 36–263 is the Radical SAM core domain; the sequence is TKVQISTLLS…ESHVRLAAGR (228 aa). Residues Cys-51, Cys-55, and Cys-58 each contribute to the [4Fe-4S] cluster site. Residues Cys-95, Cys-126, Cys-186, and Arg-258 each contribute to the [2Fe-2S] cluster site.

It belongs to the radical SAM superfamily. Biotin synthase family. As to quaternary structure, homodimer. The cofactor is [4Fe-4S] cluster. It depends on [2Fe-2S] cluster as a cofactor.

It catalyses the reaction (4R,5S)-dethiobiotin + (sulfur carrier)-SH + 2 reduced [2Fe-2S]-[ferredoxin] + 2 S-adenosyl-L-methionine = (sulfur carrier)-H + biotin + 2 5'-deoxyadenosine + 2 L-methionine + 2 oxidized [2Fe-2S]-[ferredoxin]. Its pathway is cofactor biosynthesis; biotin biosynthesis; biotin from 7,8-diaminononanoate: step 2/2. Functionally, catalyzes the conversion of dethiobiotin (DTB) to biotin by the insertion of a sulfur atom into dethiobiotin via a radical-based mechanism. In Gluconobacter oxydans (strain 621H) (Gluconobacter suboxydans), this protein is Biotin synthase.